We begin with the raw amino-acid sequence, 463 residues long: Protein phosphatase PP2A regulatory subunit B (463 aa).

2 WD repeats span residues 27–66 (TEADIISAVEFDHTGDYLATGDKGGRVVLFERNHSKKGCE) and 87–128 (EIEE…LKVV). Ser134 carries the post-translational modification Phosphoserine. WD repeat units follow at residues 174 to 212 (AHAYHINSISVNSDAETYISADDLRINLWNLSISDHSFN), 223 to 263 (ELTE…LCDN), 282 to 320 (EIISSISDVKFSQNGRYILSRDYLTLKIWDVNMEKAPVK), and 337 to 378 (ENDC…PGDR).

This sequence belongs to the phosphatase 2A regulatory subunit B family. As to quaternary structure, PP2A exists in several trimeric forms, all of which consist of a core composed of a catalytic subunit associated with a 65 kDa (PR65) (Subunit A) and a 55 kDa (PR55) (Subunit B) regulatory subunit.

Phosphatase 2A affects a variety of biological processes in the cell such as transcription, cell cycle progression and cellular morphogenesis, and provides an initial identification of critical substrates for this phosphatase. The regulatory subunit may direct the catalytic subunit to distinct, albeit overlapping, subsets of substrates. In Schizosaccharomyces pombe (strain 972 / ATCC 24843) (Fission yeast), this protein is Protein phosphatase PP2A regulatory subunit B (pab1).